A 664-amino-acid polypeptide reads, in one-letter code: 26S rRNA (cytosine-C(5))-methyltransferase nsun-1 (664 aa).

The segment at 1–105 (MAIVKKKKVS…DDSDAGDHLP (105 aa)) is disordered. A compositionally biased stretch (basic residues) spans 38–52 (PKKKKLVKKVKKSAK). A compositionally biased stretch (basic and acidic residues) spans 53-68 (KAHEEEPIEQVEKLQL). A compositionally biased stretch (acidic residues) spans 84 to 99 (SDDEDLRDDYSDDDSD). Residues 313 to 319 (CSAPGGK), aspartate 337, and aspartate 382 each bind S-adenosyl-L-methionine. Catalysis depends on cysteine 439, which acts as the Nucleophile. The segment at 513–664 (KMSKQGVMEK…RRKKMLAKQQ (152 aa)) is disordered. Basic and acidic residues predominate over residues 519–528 (VMEKEKEKAA). Acidic residues predominate over residues 541-550 (EASESSDDEE). Positions 563–572 (KPAKKQQQKK) are enriched in basic residues. Basic and acidic residues predominate over residues 606–618 (KAAEKQAAVKEDD). 2 stretches are compositionally biased toward basic residues: residues 627–644 (KRAK…KRAA) and 652–664 (VKNR…AKQQ).

It belongs to the class I-like SAM-binding methyltransferase superfamily. RsmB/NOP family.

It localises to the nucleus. Its subcellular location is the nucleolus. The catalysed reaction is a cytidine in 26S rRNA + S-adenosyl-L-methionine = a 5-methylcytidine in 26S rRNA + S-adenosyl-L-homocysteine + H(+). Methyltransferase which methylates the carbon-5 position of cytosine 2982 to 5-methylcytosine (m5C2982) in 26S rRNA. May play a role in the translation of leucine and proline codons. May be required for the translation of specific mRNAs such as mRNAs involved in gonad development, collagen production and cuticle integrity. Plays a role in ensuring the correct localization of the germline-specific protein gld-1 during development. Not required for pre-rRNA processing, the production of mature 5S, 5.8S, 18S or 26S rRNAs or global translation. Plays a role in positively regulating fertility. The chain is 26S rRNA (cytosine-C(5))-methyltransferase nsun-1 from Caenorhabditis elegans.